The chain runs to 613 residues: 8-methylmenaquinol:fumarate reductase flavoprotein subunit (613 aa).

The tat-type signal signal peptide spans 1-33 (MSEQFTRREFLQSACITMGALAVSTSGVDRAFA). FAD contacts are provided by residues 53 to 58 (GSGAAG), 78 to 93 (SKVM…AEGG), and Asp-255. Residues His-276 and Thr-288 each contribute to the substrate site. Catalysis depends on Arg-319, which acts as the Proton acceptor. His-387 provides a ligand contact to substrate. Glu-413 contacts FAD. Arg-424 is a substrate binding site. An FAD-binding site is contributed by 429 to 430 (SL).

Belongs to the FAD-dependent oxidoreductase 2 family. FRD/SDH subfamily. The MFR complex is composed of three subunits: a flavoprotein (SdhA), an iron-sulfur protein (SdhB), and one hydrophobic anchor protein (SdhE). FAD is required as a cofactor. In terms of processing, predicted to be exported by the Tat system. The position of the signal peptide cleavage has not been experimentally proven.

Its subcellular location is the periplasm. It localises to the cell membrane. It catalyses the reaction 8-methylmenaquinone-6 + succinate = 8-methylmenaquinol-6 + fumarate. In terms of biological role, flavoprotein subunit of 8-methylmenaquinol:fumarate reductase (MFR), that catalyzes the reduction of fumarate using 8-methylmenaquinol-6 as electron donor. The complex shows no succinate oxidation activity. Is involved in anaerobic metabolism. SdhA contains the dicarboxylate reduction site. The sequence is that of 8-methylmenaquinol:fumarate reductase flavoprotein subunit from Wolinella succinogenes (strain ATCC 29543 / DSM 1740 / CCUG 13145 / JCM 31913 / LMG 7466 / NCTC 11488 / FDC 602W) (Vibrio succinogenes).